Here is a 344-residue protein sequence, read N- to C-terminus: L-rhamnose-proton symporter (344 aa).

10 helical membrane-spanning segments follow: residues 4–24, 38–58, 68–88, 101–121, 137–157, 175–195, 214–234, 259–279, 290–310, and 321–341; these read AITMGIFWHLIGAASAACFYA, WSVGGIVSWLILPWAISALLL, FNLSTLLPVFLFGAMWGIGNI, MGIGIAIGITLIVGTLMTPII, TLLGVFVALIGVGIVTRAGQL, LLLAVMCGIFSAGMSFAMNAA, LPSYVVIMGGGALVNLGFCFI, ILLSALGGLMWYLQFFFYAWG, MSWMLHMSFYVLCGGLVGLVL, and VAVLSLGCVVIIIAANIVGLG.

This sequence belongs to the L-rhamnose transporter (TC 2.A.7.6) family.

The protein localises to the cell inner membrane. It carries out the reaction L-rhamnopyranose(in) + H(+)(in) = L-rhamnopyranose(out) + H(+)(out). Its function is as follows. Uptake of L-rhamnose across the cytoplasmic membrane with the concomitant transport of protons into the cell (symport system). The chain is L-rhamnose-proton symporter from Salmonella dublin (strain CT_02021853).